A 585-amino-acid chain; its full sequence is T-cell surface protein tactile (585 aa).

A signal peptide spans 1 to 21 (MEKKWKYCAVYYIIQIHFVKG). Over 22–519 (VWEKTVNTEE…IVVNKPKDGM (498 aa)) the chain is Extracellular. One can recognise an Ig-like V-type 1 domain in the interval 38–125 (GSDVNLTCQT…YECMLVLYPE (88 aa)). N-linked (GlcNAc...) asparagine glycosylation is found at Asn42, Asn97, Asn107, Asn148, Asn156, Asn166, Asn200, Asn215, Asn277, Asn278, Asn300, Asn350, and Asn368. Cysteines 45 and 118 form a disulfide. In terms of domain architecture, Ig-like V-type 2 spans 156 to 238 (NQTLEIPCFQ…YRLHLSPVQI (83 aa)). Cys163 and Cys247 form a disulfide bridge. Residues 269 to 375 (PEIPVIVENN…VWNISSEKIT (107 aa)) form the Ig-like C2-type domain. The cysteines at positions 290 and 355 are disulfide-linked. Polar residues-rich tracts occupy residues 385–418 (TDPPLSVTESTLDTQPSPASSVSPARYPATSSVT), 426–452 (RPNTTPQPSNSSMTTRGFNYPWTSSGT), and 460–475 (RIPSETYSSSPSGAGS). The segment at 385-475 (TDPPLSVTES…YSSSPSGAGS (91 aa)) is disordered. N-linked (GlcNAc...) asparagine glycosylation occurs at Asn435. N-linked (GlcNAc...) asparagine glycosylation is present at Asn497. A helical membrane pass occupies residues 520 to 540 (SWPVIVAALLFCCMILFGLGV). At 541–585 (RKWCQYQKEIMERPPPFKPPPPPIKYTCIQEPNESDLPYHEMETL) the chain is on the cytoplasmic side.

As to quaternary structure, homodimer; disulfide-linked. Interacts with PVR. As to expression, expressed on normal T-cell lines and clones, and some transformed T-cells, but no other cultured cell lines tested. It is expressed at very low levels on activated B-cells.

It localises to the membrane. May be involved in adhesive interactions of activated T and NK cells during the late phase of the immune response. Promotes NK cell-target adhesion by interacting with PVR present on target cells. May function at a time after T and NK cells have penetrated the endothelium using integrins and selectins, when they are actively engaging diseased cells and moving within areas of inflammation. The sequence is that of T-cell surface protein tactile (CD96) from Homo sapiens (Human).